The sequence spans 334 residues: MAGGAAEAAAAVVEVGSSGQFEELLRLRAKSLLVVHFWAPWAPQCAQMNDVMAELAKEHQQVSFVKLEAEAVPEVSEKYEISSVPTFLFFKNSQKIDRLDGAHAPELTKKVQRHASSGSFSPSGSEHPKEDLSLRLKKLTHAAPCMLFMKGTPQEPRCGFSKQMVEILNKHNIQFSSFDIFSDEEVRQGLKTYSSWPTYPQLYVSGELIGGLDIIKELEASKELDTICPKAPKLEERLKVLTNKASVMLFMKGNKQEAKCGFSRQILEILNSTGIEYETFDILEDEEVRQGLKAYSNWPTYPQLYVKGELVGGLDIVKELKENGELLPILKGEN.

A2 carries the N-acetylalanine modification. Residues 2–116 (AGGAAEAAAA…LTKKVQRHAS (115 aa)) form the Thioredoxin domain. The segment at 110 to 131 (KVQRHASSGSFSPSGSEHPKED) is disordered. 2 positions are modified to phosphoserine: S116 and S119. Residues 116 to 125 (SSGSFSPSGS) show a composition bias toward low complexity. Glutaredoxin domains follow at residues 145-235 (CMLF…PKLE) and 236-334 (ERLK…KGEN). [2Fe-2S] cluster contacts are provided by C158 and C260.

As to quaternary structure, homodimer; the homodimer is independent of 2Fe-2S clusters. Heterotrimer; forms a heterotrimeric complex composed by two BOLA2 molecules and one GLRX3 molecule; linked by [2Fe-2S] clusters. Interacts (via N-terminus) with PRKCQ/PKC-theta. Interacts (via C-terminus) with CSRP3. Interacts with CSRP2.

The protein localises to the cytoplasm. Its subcellular location is the cytosol. It is found in the cell cortex. The protein resides in the myofibril. It localises to the sarcomere. The protein localises to the z line. Together with BOLA2, acts as a cytosolic iron-sulfur (Fe-S) cluster assembly factor that facilitates [2Fe-2S] cluster insertion into a subset of cytosolic proteins. Acts as a critical negative regulator of cardiac hypertrophy and a positive inotropic regulator. Required for hemoglobin maturation. Does not possess any thyoredoxin activity since it lacks the conserved motif that is essential for catalytic activity. The protein is Glutaredoxin-3 (GLRX3) of Bos taurus (Bovine).